The chain runs to 71 residues: Small ribosomal subunit protein bS21 (71 aa).

Basic and acidic residues predominate over residues 34–44; it reads RREHYEKPTSE. A disordered region spans residues 34–71; that stretch reads RREHYEKPTSERKRKKAAAVKRHAKKLSRDNARRTRLY. The segment covering 45 to 59 has biased composition (basic residues); sequence RKRKKAAAVKRHAKK. A compositionally biased stretch (basic and acidic residues) spans 60-71; the sequence is LSRDNARRTRLY.

The protein belongs to the bacterial ribosomal protein bS21 family.

The polypeptide is Small ribosomal subunit protein bS21 (Idiomarina loihiensis (strain ATCC BAA-735 / DSM 15497 / L2-TR)).